The chain runs to 314 residues: 2,3-dihydroxyphenylpropionate/2,3-dihydroxicinnamic acid 1,2-dioxygenase (314 aa).

His-115 functions as the Proton donor in the catalytic mechanism. The Proton acceptor role is filled by His-179.

This sequence belongs to the LigB/MhpB extradiol dioxygenase family. Homotetramer. Fe(2+) serves as cofactor.

The catalysed reaction is 3-(2,3-dihydroxyphenyl)propanoate + O2 = (2Z,4E)-2-hydroxy-6-oxonona-2,4-dienedioate + H(+). It carries out the reaction (2E)-3-(2,3-dihydroxyphenyl)prop-2-enoate + O2 = (2Z,4E,7E)-2-hydroxy-6-oxonona-2,4,7-trienedioate + H(+). It functions in the pathway aromatic compound metabolism; 3-phenylpropanoate degradation. In terms of biological role, catalyzes the non-heme iron(II)-dependent oxidative cleavage of 2,3-dihydroxyphenylpropionic acid and 2,3-dihydroxicinnamic acid into 2-hydroxy-6-ketononadienedioate and 2-hydroxy-6-ketononatrienedioate, respectively. The sequence is that of 2,3-dihydroxyphenylpropionate/2,3-dihydroxicinnamic acid 1,2-dioxygenase from Escherichia coli O139:H28 (strain E24377A / ETEC).